The sequence spans 199 residues: Single-stranded DNA-binding protein 2 (199 aa).

One can recognise an SSB domain in the interval 1-110; sequence MAGETVITVV…LDVDEVGASL (110 aa). The disordered stretch occupies residues 114-199; sequence TAKVTKTSGQ…GGGYSDEPPF (86 aa). Positions 123 to 156 are enriched in gly residues; sequence QGRGGQGGYGGGGGGQGGGGWGGGPGGGQQGGGA. Residues 157–166 are compositionally biased toward low complexity; that stretch reads PADDPWATGG. The span at 167-193 shows a compositional bias: gly residues; the sequence is APAGGQQGGGGQGGGGWGGGSGGGGGY.

In terms of assembly, homotetramer. Post-translationally, phosphorylated on tyrosine residue(s) when expressed in E.coli.

Its subcellular location is the cytoplasm. The protein resides in the nucleoid. In Streptomyces coelicolor (strain ATCC BAA-471 / A3(2) / M145), this protein is Single-stranded DNA-binding protein 2 (ssb2).